A 199-amino-acid chain; its full sequence is Casparian strip membrane protein 1 (199 aa).

The Cytoplasmic portion of the chain corresponds to 1–37 (MKSESAAIDIPESSSVAKGKAPLIAVSRNEKGGYRKG). The helical transmembrane segment at 38-58 (IAIFDFILRLAAIATALAAAA) threads the bilayer. Residues 59 to 87 (AMGTSDETLPFFTQFFQFQASYDDLPTFQ) lie on the Extracellular side of the membrane. Residues 88–108 (FFVIAIAIVGGYLVLSLPFSI) form a helical membrane-spanning segment. At 109-120 (VAIVRPHAVGPR) the chain is on the cytoplasmic side. The helical transmembrane segment at 121-141 (LLLIILDAVALTLNTAAGAAA) threads the bilayer. At 142-173 (AAIVYLAHNGNSNTNWLAICQQYGDFCQKVSG) the chain is on the extracellular side. Residues 174–194 (AVVASFITVVIFVFLIVLSAF) traverse the membrane as a helical segment. Residues 195–199 (ALRRH) are Cytoplasmic-facing.

Belongs to the Casparian strip membrane proteins (CASP) family. As to quaternary structure, homodimer and heterodimers.

It is found in the cell membrane. Regulates membrane-cell wall junctions and localized cell wall deposition. Required for establishment of the Casparian strip membrane domain (CSD) and the subsequent formation of Casparian strips, a cell wall modification of the root endodermis that determines an apoplastic barrier between the intraorganismal apoplasm and the extraorganismal apoplasm and prevents lateral diffusion. The protein is Casparian strip membrane protein 1 of Populus trichocarpa (Western balsam poplar).